A 416-amino-acid polypeptide reads, in one-letter code: Neurotensin receptor type 2 (416 aa).

Residues 1-32 (METSSPWPPRPSPSAGLSLEARLGVDTRLWAK) lie on the Extracellular side of the membrane. Residues 33-55 (VLFTALYSLIFAFGTAGNALSVH) traverse the membrane as a helical segment. The Cytoplasmic segment spans residues 56–64 (VVLKARAGR). The helical transmembrane segment at 65-87 (PGRLRYHVLSLALSALLLLLVSM) threads the bilayer. The Extracellular portion of the chain corresponds to 88 to 109 (PMELYNFVWSHYPWVFGDLGCR). The cysteines at positions 108 and 194 are disulfide-linked. A helical transmembrane segment spans residues 110-131 (GYYFVRELCAYATVLSVASLSA). The Cytoplasmic segment spans residues 132–154 (ERCLAVCQPLRARRLLTPRRTRR). A helical transmembrane segment spans residues 155 to 176 (LLSLVWVASLGLALPMAVIMGQ). Residues 177–216 (KHEVESADGEPEPASRVCTVLVSRATLQVFIQVNVLVSFA) lie on the Extracellular side of the membrane. Residues 217–237 (LPLALTAFLNGITVNHLMALY) traverse the membrane as a helical segment. At 238–297 (SQVPSASAQVSSIPSRLELLSEEGLLGFITWRKTLSLGVQASLVRHKDASQIRSLQHSAQ) the chain is on the cytoplasmic side. Residues 298–318 (VLRAIVAVYVICWLPYHARRL) form a helical membrane-spanning segment. Residues 319-337 (MYCYIPDDGWTNELYDFYH) lie on the Extracellular side of the membrane. The helical transmembrane segment at 338–358 (YFYMVTNTLFYVSSAVTPILY) threads the bilayer. The Cytoplasmic portion of the chain corresponds to 359-416 (NAVSSSFRKLFLESLGSLCGEQHSLVPLPQEAPESTTSTYSFRLWGSPRNPSLGEIQV). A lipid anchor (S-palmitoyl cysteine) is attached at Cys377. At Ser410 the chain carries Phosphoserine.

Belongs to the G-protein coupled receptor 1 family. Neurotensin receptor subfamily. NTSR2 sub-subfamily. Abundant in cortex and hypothalamus, and lower levels seen in the heart and intestine.

The protein resides in the cell membrane. Its function is as follows. Receptor for the tridecapeptide neurotensin. It is associated with G proteins that activate a phosphatidylinositol-calcium second messenger system. This chain is Neurotensin receptor type 2 (Ntsr2), found in Rattus norvegicus (Rat).